A 791-amino-acid chain; its full sequence is Ataxin-2 homolog (791 aa).

A compositionally biased stretch (polar residues) spans 1–22 (MATRSVSMKQTSQRAASPNKTQ). 8 disordered regions span residues 1–28 (MATR…KKWS), 60–100 (RGGV…QQRV), 112–134 (RTET…GVPL), 235–311 (TRSN…KEGQ), 326–423 (SLDS…TKLG), 452–505 (KPAP…PVSS), 613–634 (NPSQ…GNSS), and 707–791 (PMYG…EAKP). Positions 76–96 (SLASSEENVSSVSGSAKSNNS) are enriched in low complexity. Basic and acidic residues-rich tracts occupy residues 112-125 (RTET…RWMP) and 243-256 (NNKD…EAPH). Positions 326–337 (SLDSKQPSSTKS) are enriched in polar residues. 2 stretches are compositionally biased toward basic and acidic residues: residues 360–371 (DSKEPRKEEAEK) and 395–418 (SKEE…KETT). Low complexity predominate over residues 473-486 (SIPSTTPQSPSVVS). A compositionally biased stretch (polar residues) spans 487–497 (NGENKPSSSPV). 2 stretches are compositionally biased toward low complexity: residues 715-725 (SNSQRSFNSSN) and 734-760 (NNNA…NTTA). The segment covering 774–791 (DATEKTEKDASANQEAKP) has biased composition (basic and acidic residues).

Belongs to the ataxin-2 family. Interacts with mkt1.

It localises to the cytoplasm. Its function is as follows. Involved in post-transcriptional regulation of gene expression, probably by association with mkt1. This is Ataxin-2 homolog from Schizosaccharomyces pombe (strain 972 / ATCC 24843) (Fission yeast).